Here is a 346-residue protein sequence, read N- to C-terminus: Elongation factor Ts (346 aa).

An involved in Mg(2+) ion dislocation from EF-Tu region spans residues 80–83 (TDFV).

It belongs to the EF-Ts family.

The protein localises to the cytoplasm. Its function is as follows. Associates with the EF-Tu.GDP complex and induces the exchange of GDP to GTP. It remains bound to the aminoacyl-tRNA.EF-Tu.GTP complex up to the GTP hydrolysis stage on the ribosome. This Streptococcus thermophilus (strain CNRZ 1066) protein is Elongation factor Ts.